A 655-amino-acid polypeptide reads, in one-letter code: p-hydroxybenzoic acid efflux pump subunit AaeB (655 aa).

The Periplasmic portion of the chain corresponds to 1–12 (MGIFSIANQHIR). Residues 13 to 33 (FAVKLATAIVLALFVGFHFQL) traverse the membrane as a helical segment. Over 34-37 (ETPR) the chain is Cytoplasmic. The helical transmembrane segment at 38 to 58 (WAVLTAAIVAAGPAFAAGGEP) threads the bilayer. Over 59 to 68 (YSGAIRYRGF) the chain is Periplasmic. A helical transmembrane segment spans residues 69–89 (LRIIGTFIGCIAGLVIIIAMI). Topologically, residues 90–92 (RAP) are cytoplasmic. A helical transmembrane segment spans residues 93 to 113 (LLMILVCCIWAGFCTWISSLV). Over 114–120 (RIENSYA) the chain is Periplasmic. Residues 121–141 (WGLAGYTALIIVITIQPEPLL) traverse the membrane as a helical segment. The Cytoplasmic segment spans residues 142-151 (TPQFAVERCS). A helical membrane pass occupies residues 152 to 172 (EIVIGIVCAIMADLLFSPRSI). Topologically, residues 173-369 (KQEVDRELES…RTTLSCILGT (197 aa)) are periplasmic. A helical membrane pass occupies residues 370 to 390 (LFWLWTGWTSGSGAMVMIAVV). Topologically, residues 391–406 (TSLAMRLPNPRMVAID) are cytoplasmic. A helical transmembrane segment spans residues 407 to 427 (FIYGTLAALPLGLLYFLVIIP). Residues 428–430 (NTQ) are Periplasmic-facing. The helical transmembrane segment at 431-451 (QSMLLLCISLAVLGFFLGIEV) threads the bilayer. Residues 452–458 (QKRRLGS) are Cytoplasmic-facing. The helical transmembrane segment at 459–479 (MGALASTINIIVLDNPMTFHF) threads the bilayer. Residues 480–481 (SQ) lie on the Periplasmic side of the membrane. A helical transmembrane segment spans residues 482 to 502 (FLDSALGQIVGCVLAFTVILL). Residues 503–655 (VRDKSRDRTG…HKYQHALTDS (153 aa)) are Cytoplasmic-facing.

The protein belongs to the aromatic acid exporter ArAE (TC 2.A.85) family.

The protein localises to the cell inner membrane. Functionally, forms an efflux pump with AaeA. Could function as a metabolic relief valve, allowing to eliminate certain compounds when they accumulate to high levels in the cell. The chain is p-hydroxybenzoic acid efflux pump subunit AaeB from Escherichia coli O6:H1 (strain CFT073 / ATCC 700928 / UPEC).